We begin with the raw amino-acid sequence, 84 residues long: Exodeoxyribonuclease 7 small subunit (84 aa).

The protein belongs to the XseB family. In terms of assembly, heterooligomer composed of large and small subunits.

The protein resides in the cytoplasm. It catalyses the reaction Exonucleolytic cleavage in either 5'- to 3'- or 3'- to 5'-direction to yield nucleoside 5'-phosphates.. In terms of biological role, bidirectionally degrades single-stranded DNA into large acid-insoluble oligonucleotides, which are then degraded further into small acid-soluble oligonucleotides. This is Exodeoxyribonuclease 7 small subunit from Azoarcus sp. (strain BH72).